The primary structure comprises 190 residues: Outer-membrane lipoprotein LolB (190 aa).

Residues 1–16 (MRLRFSLLLTVSLLAG) form the signal peptide. Cys-17 carries N-palmitoyl cysteine lipidation. Cys-17 carries the S-diacylglycerol cysteine lipid modification.

The protein belongs to the LolB family. In terms of assembly, monomer.

Its subcellular location is the cell outer membrane. Its function is as follows. Plays a critical role in the incorporation of lipoproteins in the outer membrane after they are released by the LolA protein. The chain is Outer-membrane lipoprotein LolB from Dechloromonas aromatica (strain RCB).